The primary structure comprises 742 residues: 5-methyltetrahydropteroyltriglutamate--homocysteine methyltransferase (742 aa).

Residues 18–21 and K112 each bind 5-methyltetrahydropteroyltri-L-glutamate; that span reads REWK. L-homocysteine is bound by residues 420-422 and E473; that span reads IGS. L-methionine contacts are provided by residues 420-422 and E473; that span reads IGS. W550 is a binding site for 5-methyltetrahydropteroyltri-L-glutamate. D588 serves as a coordination point for L-homocysteine. D588 contacts L-methionine. Residue E594 coordinates 5-methyltetrahydropteroyltri-L-glutamate. H630, C632, and E654 together coordinate Zn(2+). The active-site Proton donor is the H683. C715 serves as a coordination point for Zn(2+).

The protein belongs to the vitamin-B12 independent methionine synthase family. It depends on Zn(2+) as a cofactor.

It carries out the reaction 5-methyltetrahydropteroyltri-L-glutamate + L-homocysteine = tetrahydropteroyltri-L-glutamate + L-methionine. The protein operates within amino-acid biosynthesis; L-methionine biosynthesis via de novo pathway; L-methionine from L-homocysteine (MetE route): step 1/1. Its function is as follows. Catalyzes the transfer of a methyl group from 5-methyltetrahydrofolate to homocysteine resulting in methionine formation. This Staphylococcus aureus (strain MRSA252) protein is 5-methyltetrahydropteroyltriglutamate--homocysteine methyltransferase.